Consider the following 2828-residue polypeptide: MPKRAHWGALSVVLILLWGHPRVALACPHPCACYVPSEVHCTFRSLASVPAGIAKHVERINLGFNSIQALSETSFAGLTKLELLMIHGNEIPSIPDGALRDLSSLQVFKFSYNKLRVITGQTLQGLSNLMRLHIDHNKIEFIHPQAFNGLTSLRLLHLEGNLLHQLHPSTFSTFTFLDYFRLSTIRHLYLAENMVRTLPASMLRNMPLLENLYLQGNPWTCDCEMRWFLEWDAKSRGILKCKKDKAYEGGQLCAMCFSPKKLYKHEIHKLKDMTCLKPSIESPLRQNRSRSIEEEQEQEEDGGSQLILEKFQLPQWSISLNMTDEHGNMVNLVCDIKKPMDVYKIHLNQTDPPDIDINATVALDFECPMTRENYEKLWKLIAYYSEVPVKLHRELMLSKDPRVSYQYRQDADEEALYYTGVRAQILAEPEWVMQPSIDIQLNRRQSTAKKVLLSYYTQYSQTISTKDTRQARGRSWVMIEPSGAVQRDQTVLEGGPCQLSCNVKASESPSIFWVLPDGSILKAPMDDPDSKFSILSSGWLRIKSMEPSDSGLYQCIAQVRDEMDRMVYRVLVQSPSTQPAEKDTVTIGKNPGESVTLPCNALAIPEAHLSWILPNRRIINDLANTSHVYMLPNGTLSIPKVQVSDSGYYRCVAVNQQGADHFTVGITVTKKGSGLPSKRGRRPGAKALSRVREDIVEDEGGSGMGDEENTSRRLLHPKDQEVFLKTKDDAINGDKKAKKGRRKLKLWKHSEKEPETNVAEGRRVFESRRRINMANKQINPERWADILAKVRGKNLPKGTEVPPLIKTTSPPSLSLEVTPPFPAISPPSASPVQTVTSAEESSADVPLLGEEEHVLGTISSASMGLEHNHNGVILVEPEVTSTPLEEVVDDLSEKTEEITSTEGDLKGTAAPTLISEPYEPSPTLHTLDTVYEKPTHEETATEGWSAADVGSSPEPTSSEYEPPLDAVSLAESEPMQYFDPDLETKSQPDEDKMKEDTFAHLTPTPTIWVNDSSTSQLFEDSTIGEPGVPGQSHLQGLTDNIHLVKSSLSTQDTLLIKKGMKEMSQTLQGGNMLEGDPTHSRSSESEGQESKSITLPDSTLGIMSSMSPVKKPAETTVGTLLDKDTTTATTTPRQKVAPSSTMSTHPSRRRPNGRRRLRPNKFRHRHKQTPPTTFAPSETFSTQPTQAPDIKISSQVESSLVPTAWVDNTVNTPKQLEMEKNAEPTSKGTPRRKHGKRPNKHRYTPSTVSSRASGSKPSPSPENKHRNIVTPSSETILLPRTVSLKTEGPYDSLDYMTTTRKIYSSYPKVQETLPVTYKPTSDGKEIKDDVATNVDKHKSDILVTGESITNAIPTSRSLVSTMGEFKEESSPVGFPGTPTWNPSRTAQPGRLQTGIPVTTSGENLTDPPLLKELEDVDFTSEFLSSLTVSTPFHQEEAGSSTTLSSIKVEVASSQAETTTLDQDHLETTVAILLSETRPQNHTPTAARMKEPASSSPSTILMSLGQTTTTKPALPSPRISQASRDSKENVFLNYVGNPETEATPVNNEGTQHMSGPNELSTPSSDQDAFNLSTKLELEKQVFGSRSLPRGPDSQRQDGRVHASHQLTRVPAKPILPTATVRLPEMSTQSASRYFVTSQSPRHWTNKPEITTYPSGALPENKQFTTPRLSSTTIPLPLHMSKPSIPSKFTDRRTDQFNGYSKVFGNNNIPEARNPVGKPPSPRIPHYSNGRLPFFTNKTLSFPQLGVTRRPQIPTSPAPVMRERKVIPGSYNRIHSHSTFHLDFGPPAPPLLHTPQTTGSPSTNLQNIPMVSSTQSSISFITSSVQSSGSFHQSSSKFFAGGPPASKFWSLGEKPQILTKSPQTVSVTAETDTVFPCEATGKPKPFVTWTKVSTGALMTPNTRIQRFEVLKNGTLVIRKVQVQDRGQYMCTASNLHGLDRMVVLLSVTVQQPQILASHYQDVTVYLGDTIAMECLAKGTPAPQISWIFPDRRVWQTVSPVEGRITLHENRTLSIKEASFSDRGVYKCVASNAAGADSLAIRLHVAALPPVIHQEKLENISLPPGLSIHIHCTAKAAPLPSVRWVLGDGTQIRPSQFLHGNLFVFPNGTLYIRNLAPKDSGRYECVAANLVGSARRTVQLNVQRAAANARITGTSPRRTDVRYGGTLKLDCSASGDPWPRILWRLPSKRMIDALFSFDSRIKVFANGTLVVKSVTDKDAGDYLCVARNKVGDDYVVLKVDVVMKPAKIEHKEENDHKVFYGGDLKVDCVATGLPNPEISWSLPDGSLVNSFMQSDDSGGRTKRYVVFNNGTLYFNEVGMREEGDYTCFAENQVGKDEMRVRVKVVTAPATIRNKTYLAVQVPYGDVVTVACEAKGEPMPKVTWLSPTNKVIPTSSEKYQIYQDGTLLIQKAQRSDSGNYTCLVRNSAGEDRKTVWIHVNVQPPKINGNPNPITTVREIAAGGSRKLIDCKAEGIPTPRVLWAFPEGVVLPAPYYGNRITVHGNGSLDIRSLRKSDSVQLVCMARNEGGEARLILQLTVLEPMEKPIFHDPISEKITAMAGHTISLNCSAAGTPTPSLVWVLPNGTDLQSGQQLQRFYHKADGMLHISGLSSVDAGAYRCVARNAAGHTERLVSLKVGLKPEANKQYHNLVSIINGETLKLPCTPPGAGQGRFSWTLPNGMHLEGPQTLGRVSLLDNGTLTVREASVFDRGTYVCRMETEYGPSVTSIPVIVIAYPPRITSEPTPVIYTRPGNTVKLNCMAMGIPKADITWELPDKSHLKAGVQARLYGNRFLHPQGSLTIQHATQRDAGFYKCMAKNILGSDSKTTYIHVF.

Residues 1–26 form the signal peptide; the sequence is MPKRAHWGALSVVLILLWGHPRVALA. Residues 27–55 enclose the LRRNT domain; that stretch reads CPHPCACYVPSEVHCTFRSLASVPAGIAK. LRR repeat units lie at residues 56–77, 80–101, 104–125, 128–149, 152–173, and 184–205; these read HVERINLGFNSIQALSETSFAG, KLELLMIHGNEIPSIPDGALRD, SLQVFKFSYNKLRVITGQTLQG, NLMRLHIDHNKIEFIHPQAFNG, SLRLLHLEGNLLHQLHPSTFST, and TIRHLYLAENMVRTLPASMLRN. One can recognise an LRRCT domain in the interval 217-277; the sequence is NPWTCDCEMR…HKLKDMTCLK (61 aa). Residues N287 and N321 are each glycosylated (N-linked (GlcNAc...) asparagine). Ig-like C2-type domains are found at residues 481–571 and 575–669; these read PSGA…YRVL and PSTQ…ITVT. Disulfide bonds link C501-C555 and C599-C651. N-linked (GlcNAc...) asparagine glycosylation is present at N633. 5 disordered regions span residues 671 to 715, 933 to 962, 1068 to 1190, 1204 to 1275, and 1367 to 1389; these read KGSG…RRLL, KPTHEETATEGWSAADVGSSPEPTSSEYEP, QGGN…APDI, AWVD…SSET, and EESSPVGFPGTPTWNPSRTAQPG. The span at 695–708 shows a compositional bias: acidic residues; sequence IVEDEGGSGMGDEE. O-linked (Xyl...) (chondroitin sulfate) serine glycosylation occurs at S702. Positions 951 to 962 are enriched in low complexity; that stretch reads SSPEPTSSEYEP. Residues 1090 to 1107 are compositionally biased toward polar residues; sequence SKSITLPDSTLGIMSSMS. The span at 1146 to 1168 shows a compositional bias: basic residues; it reads PSRRRPNGRRRLRPNKFRHRHKQ. 2 stretches are compositionally biased toward polar residues: residues 1169-1190 and 1204-1214; these read TPPTTFAPSETFSTQPTQAPDI and AWVDNTVNTPK. Basic residues predominate over residues 1229-1243; the sequence is TPRRKHGKRPNKHRY. N1403 carries N-linked (GlcNAc...) asparagine glycosylation. Residues 1410–1434 form an LRR 7 repeat; the sequence is LKELEDVDFTSEFLSSLTVSTPFHQ. Disordered stretches follow at residues 1479–1499, 1536–1566, 1579–1603, 1669–1689, and 1700–1719; these read QNHTPTAARMKEPASSSPSTI, NPETEATPVNNEGTQHMSGPNELSTPSSDQD, QVFGSRSLPRGPDSQRQDGRVHASH, STTIPLPLHMSKPSIPSKFTD, and KVFGNNNIPEARNPVGKPPS. Positions 1542–1566 are enriched in polar residues; it reads TPVNNEGTQHMSGPNELSTPSSDQD. An N-linked (GlcNAc...) asparagine glycan is attached at N1735. 10 Ig-like C2-type domains span residues 1853 to 1946, 1950 to 2041, 2046 to 2140, 2146 to 2239, 2242 to 2343, 2345 to 2432, 2440 to 2534, 2542 to 2630, 2637 to 2722, and 2733 to 2828; these read PQIL…LSVT, PQIL…IRLH, PPVI…LNVQ, ARIT…VDVV, PAKI…KVVT, PATI…KTVW, PKIN…LQLT, PIFH…RLVS, PEAN…PSVT, and PRIT…IHVF. Intrachain disulfides connect C1875-C1928 and C1972-C2025. N-linked (GlcNAc...) asparagine glycosylation is found at N2007 and N2056. 8 disulfides stabilise this stretch: C2069/C2122, C2168/C2221, C2265/C2324, C2368/C2418, C2466/C2518, C2564/C2616, C2659/C2711, and C2755/C2810. N2693 is a glycosylation site (N-linked (GlcNAc...) asparagine).

Detected in placenta (at protein level). Detected in cerebrospinal fluid and fibroblasts (at protein level). Highly expressed in kidney, also detected on liver and spleen. Expressed by proximal tubular cells of the kidney (at protein level). Expression highly increases during chronic kidney disease and autosomal dominant polycystic kidney disease, where is detected in cysts.

The protein resides in the secreted. Functionally, in kidney, has anti-inflammatory and anti-fibrotic properties by limiting the induction of chemokines, fibronectin and collagen expression in response to TGB1 and pro-inflammatory stimuli. The chain is Matrix-remodeling-associated protein 5 (MXRA5) from Homo sapiens (Human).